We begin with the raw amino-acid sequence, 192 residues long: Putative metal-sulfur cluster biosynthesis proteins YuaD (192 aa).

Residues 15 to 179 form the MOSC domain; it reads ADTKSFVTKQ…VYTGDEIEVH (165 aa).

This is Putative metal-sulfur cluster biosynthesis proteins YuaD (yuaD) from Bacillus subtilis (strain 168).